A 130-amino-acid polypeptide reads, in one-letter code: Large ribosomal subunit protein bL12c (130 aa).

The protein belongs to the bacterial ribosomal protein bL12 family. Homodimer. Part of the ribosomal stalk of the 50S ribosomal subunit. Forms a multimeric L10(L12)X complex, where L10 forms an elongated spine to which 2 to 4 L12 dimers bind in a sequential fashion. Binds GTP-bound translation factors.

The protein localises to the plastid. It localises to the chloroplast. Its function is as follows. Forms part of the ribosomal stalk which helps the ribosome interact with GTP-bound translation factors. Is thus essential for accurate translation. The chain is Large ribosomal subunit protein bL12c from Cyanidium caldarium (Red alga).